A 198-amino-acid polypeptide reads, in one-letter code: Glycerol-3-phosphate acyltransferase (198 aa).

5 consecutive transmembrane segments (helical) span residues 2–22 (IIVI…TGYL), 55–75 (MITQ…CMLI), 88–108 (YLSI…FLGF), 118–138 (VGAF…VYFV), and 162–182 (IALR…GLLI).

The protein belongs to the PlsY family. Probably interacts with PlsX.

Its subcellular location is the cell membrane. The catalysed reaction is an acyl phosphate + sn-glycerol 3-phosphate = a 1-acyl-sn-glycero-3-phosphate + phosphate. It functions in the pathway lipid metabolism; phospholipid metabolism. Catalyzes the transfer of an acyl group from acyl-phosphate (acyl-PO(4)) to glycerol-3-phosphate (G3P) to form lysophosphatidic acid (LPA). This enzyme utilizes acyl-phosphate as fatty acyl donor, but not acyl-CoA or acyl-ACP. The polypeptide is Glycerol-3-phosphate acyltransferase (Clostridium acetobutylicum (strain ATCC 824 / DSM 792 / JCM 1419 / IAM 19013 / LMG 5710 / NBRC 13948 / NRRL B-527 / VKM B-1787 / 2291 / W)).